The sequence spans 327 residues: D-alanine--D-alanine ligase (327 aa).

The 200-residue stretch at 113–312 folds into the ATP-grasp domain; it reads KRLWMTHGLA…YEDFVMQVLA (200 aa). 139–194 serves as a coordination point for ATP; it reads VADLGLPLIVKPAREGSSIGLTKVIAADQMRAAFEKAAGLDADVIAETFIDGAELT. 3 residues coordinate Mg(2+): Asp266, Glu279, and Asn281.

Belongs to the D-alanine--D-alanine ligase family. Mg(2+) serves as cofactor. The cofactor is Mn(2+).

It localises to the cytoplasm. The catalysed reaction is 2 D-alanine + ATP = D-alanyl-D-alanine + ADP + phosphate + H(+). It functions in the pathway cell wall biogenesis; peptidoglycan biosynthesis. Cell wall formation. The chain is D-alanine--D-alanine ligase from Cupriavidus metallidurans (strain ATCC 43123 / DSM 2839 / NBRC 102507 / CH34) (Ralstonia metallidurans).